The primary structure comprises 349 residues: uncharacterized protein (349 aa).

Residues 116 to 135 (HFSQTNPKSTPEPPCTSSSG) show a composition bias toward polar residues. The interval 116 to 148 (HFSQTNPKSTPEPPCTSSSGAGDCHENLPADGY) is disordered.

This is an uncharacterized protein from Caenorhabditis elegans.